The following is a 358-amino-acid chain: Alanine racemase (358 aa).

Lysine 35 acts as the Proton acceptor; specific for D-alanine in catalysis. Lysine 35 is subject to N6-(pyridoxal phosphate)lysine. Residue arginine 130 participates in substrate binding. Residue tyrosine 255 is the Proton acceptor; specific for L-alanine of the active site. Position 303 (methionine 303) interacts with substrate.

It belongs to the alanine racemase family. It depends on pyridoxal 5'-phosphate as a cofactor.

The catalysed reaction is L-alanine = D-alanine. Its pathway is amino-acid biosynthesis; D-alanine biosynthesis; D-alanine from L-alanine: step 1/1. Its function is as follows. Catalyzes the interconversion of L-alanine and D-alanine. May also act on other amino acids. The polypeptide is Alanine racemase (alr) (Shewanella putrefaciens (strain CN-32 / ATCC BAA-453)).